A 165-amino-acid chain; its full sequence is Large ribosomal subunit protein uL5 (165 aa).

This sequence belongs to the universal ribosomal protein uL5 family. As to quaternary structure, part of the 50S ribosomal subunit; contacts the 5S rRNA and probably tRNA. Forms a bridge to the 30S subunit in the 70S ribosome.

This is one of the proteins that bind and probably mediate the attachment of the 5S RNA into the large ribosomal subunit, where it forms part of the central protuberance. In the 70S ribosome it contacts protein S13 of the 30S subunit (bridge B1b), connecting the 2 subunits; this bridge is implicated in subunit movement. May contact the P site tRNA; the 5S rRNA and some of its associated proteins might help stabilize positioning of ribosome-bound tRNAs. The polypeptide is Large ribosomal subunit protein uL5 (Methanoregula boonei (strain DSM 21154 / JCM 14090 / 6A8)).